A 64-amino-acid chain; its full sequence is DNA gyrase inhibitor YacG (64 aa).

The Zn(2+) site is built by C10, C13, C29, and C33.

This sequence belongs to the DNA gyrase inhibitor YacG family. As to quaternary structure, interacts with GyrB. Requires Zn(2+) as cofactor.

Functionally, inhibits all the catalytic activities of DNA gyrase by preventing its interaction with DNA. Acts by binding directly to the C-terminal domain of GyrB, which probably disrupts DNA binding by the gyrase. This is DNA gyrase inhibitor YacG from Pectobacterium atrosepticum (strain SCRI 1043 / ATCC BAA-672) (Erwinia carotovora subsp. atroseptica).